We begin with the raw amino-acid sequence, 343 residues long: LRP2-binding protein (343 aa).

The TPR repeat unit spans residues 58-91 (SQATFLLGQLHYVQGCYAEAELIFDRIKDKDPQA). Sel1-like repeat units lie at residues 92–124 (LYQL…FWDS), 132–167 (YAAL…DNGN), 172–205 (VKAQ…GNGS), 206–241 (LESQ…ERGS), 242–273 (VYAQ…EYKD), and 293–328 (AIGM…RIDP).

The protein localises to the cytoplasm. May act as an adapter that regulates LRP2 function. This is LRP2-binding protein (lrp2bp) from Danio rerio (Zebrafish).